The following is a 332-amino-acid chain: T-cell surface glycoprotein CD1c1 (332 aa).

An N-terminal signal peptide occupies residues 1–17 (MLFLHFLFLDVVLGGSI). Residues 18-300 (TENVVQENIS…IILYWGHGLS (283 aa)) are Extracellular-facing. Residues Asn25, Asn38, Asn75, and Asn146 are each glycosylated (N-linked (GlcNAc...) asparagine). 2 disulfides stabilise this stretch: Cys120–Cys184 and Cys224–Cys279. Residues 205–292 (PEVWLSSSPN…HSSLRDQDII (88 aa)) form the Ig-like domain. A helical membrane pass occupies residues 301–321 (VILITFAVIVPLVLLIVLMLL). Residues 322-332 (YKKRCTYQGIQ) lie on the Cytoplasmic side of the membrane.

As to quaternary structure, heterodimer with B2M (beta-2-microglobulin).

The protein localises to the cell membrane. It is found in the endosome membrane. Antigen-presenting protein that binds self and non-self lipid and glycolipid antigens and presents them to T-cell receptors on natural killer T-cells. This is T-cell surface glycoprotein CD1c1 (CD1C1) from Cavia porcellus (Guinea pig).